The sequence spans 331 residues: Pectate lyase B (331 aa).

Positions 1-25 are cleaved as a signal peptide; the sequence is MKFTGSPLLWPSWLPLPAPPPPLPS. Asn-99 carries an N-linked (GlcNAc...) asparagine glycan. Residues Asp-139, Asp-169, and Asp-173 each coordinate Ca(2+). Residue Arg-226 is part of the active site.

It belongs to the polysaccharide lyase 1 family. The cofactor is Ca(2+).

The protein localises to the secreted. It carries out the reaction Eliminative cleavage of (1-&gt;4)-alpha-D-galacturonan to give oligosaccharides with 4-deoxy-alpha-D-galact-4-enuronosyl groups at their non-reducing ends.. It functions in the pathway glycan metabolism; pectin degradation; 2-dehydro-3-deoxy-D-gluconate from pectin: step 2/5. Functionally, acts as a virulence factor active in plant tissue maceration. The protein is Pectate lyase B (PLB) of Colletotrichum gloeosporioides (Anthracnose fungus).